The sequence spans 424 residues: 3-oxo-tetronate kinase (424 aa).

ATP contacts are provided by residues Ser-264, 363–366 (GGET), and Gly-408.

Belongs to the four-carbon acid sugar kinase family.

The catalysed reaction is 3-dehydro-L-erythronate + ATP = 3-dehydro-4-O-phospho-L-erythronate + ADP + H(+). The enzyme catalyses 3-dehydro-D-erythronate + ATP = 3-dehydro-4-O-phospho-D-erythronate + ADP + H(+). In terms of biological role, catalyzes the ATP-dependent phosphorylation of 3-oxo-tetronate to 3-oxo-tetronate 4-phosphate. The protein is 3-oxo-tetronate kinase of Methylobacterium radiotolerans (strain ATCC 27329 / DSM 1819 / JCM 2831 / NBRC 15690 / NCIMB 10815 / 0-1).